A 377-amino-acid polypeptide reads, in one-letter code: Trichodiene synthase (377 aa).

Belongs to the trichodiene synthase family.

It carries out the reaction (2E,6E)-farnesyl diphosphate = trichodiene + diphosphate. It functions in the pathway sesquiterpene biosynthesis; trichothecene biosynthesis. TS is a member of the terpene cyclase group of enzymes. It catalyzes the isomerization and cyclization of farnesyl pyro-phosphate to form trichodiene, the first cyclic intermediate in the biosynthetic pathway for trichothecenes. It serves to branch trichothecene biosynthesis from the isoprenoid pathway. This is Trichodiene synthase (TRI5) from Fusarium poae.